The primary structure comprises 147 residues: Putative pre-16S rRNA nuclease (147 aa).

Belongs to the YqgF nuclease family.

It is found in the cytoplasm. Its function is as follows. Could be a nuclease involved in processing of the 5'-end of pre-16S rRNA. This is Putative pre-16S rRNA nuclease from Ligilactobacillus salivarius (strain UCC118) (Lactobacillus salivarius).